A 117-amino-acid polypeptide reads, in one-letter code: B-box domain protein 30 (117 aa).

A B box-type; atypical zinc finger spans residues Lys-27–Ile-73. Residues Cys-32, Cys-35, Cys-54, and His-59 each coordinate Zn(2+). Residues Pro-113–Leu-117 carry the PFVFL motif.

As to quaternary structure, interacts with CO (via B-box) and with TPL (via PFVFL motif). Highly expressed in shoot apical meristems and in vascular tissues of leaves. Also detected in petioles.

Its subcellular location is the nucleus. Its function is as follows. Developmental regulator acting by forming heterodimeric complexes, that sequester CO and CO-like (COL) proteins into non-functional complexes. Engages CO and the transcriptional repressor TPL in a tripartite complex. Involved in the CO-mediated long-day flowering-promotion pathway. In Arabidopsis thaliana (Mouse-ear cress), this protein is B-box domain protein 30.